We begin with the raw amino-acid sequence, 239 residues long: Glandular kallikrein, prostatic (239 aa).

A Peptidase S1 domain is found at Val-1–Ala-236. Disulfide bonds link Cys-7–Cys-151, Cys-26–Cys-42, Cys-128–Cys-197, Cys-162–Cys-176, and Cys-187–Cys-212. His-41 (charge relay system) is an active-site residue. The N-linked (GlcNAc...) asparagine glycan is linked to Asn-78. The active-site Charge relay system is the Asp-96. Asn-169 carries N-linked (GlcNAc...) asparagine glycosylation. Catalysis depends on Ser-191, which acts as the Charge relay system.

Belongs to the peptidase S1 family. Kallikrein subfamily.

It carries out the reaction Preferential cleavage of Arg-|-Xaa bonds in small molecule substrates. Highly selective action to release kallidin (lysyl-bradykinin) from kininogen involves hydrolysis of Met-|-Xaa or Leu-|-Xaa.. In terms of biological role, glandular kallikreins cleave Met-Lys and Arg-Ser bonds in kininogen to release Lys-bradykinin. In Cavia porcellus (Guinea pig), this protein is Glandular kallikrein, prostatic.